Here is a 653-residue protein sequence, read N- to C-terminus: Acetyl-coenzyme A synthetase (653 aa).

Residues 196–199 (RGGK) and threonine 315 contribute to the CoA site. ATP-binding positions include 391 to 393 (GEP), 415 to 420 (DTWWQT), aspartate 506, and arginine 521. Position 529 (serine 529) interacts with CoA. Residue arginine 532 coordinates ATP. Positions 543 and 548 each coordinate Mg(2+). Residue lysine 618 is modified to N6-acetyllysine.

Belongs to the ATP-dependent AMP-binding enzyme family. The cofactor is Mg(2+). Acetylated. Deacetylation by the SIR2-homolog deacetylase activates the enzyme.

The enzyme catalyses acetate + ATP + CoA = acetyl-CoA + AMP + diphosphate. Catalyzes the conversion of acetate into acetyl-CoA (AcCoA), an essential intermediate at the junction of anabolic and catabolic pathways. AcsA undergoes a two-step reaction. In the first half reaction, AcsA combines acetate with ATP to form acetyl-adenylate (AcAMP) intermediate. In the second half reaction, it can then transfer the acetyl group from AcAMP to the sulfhydryl group of CoA, forming the product AcCoA. The sequence is that of Acetyl-coenzyme A synthetase from Laribacter hongkongensis (strain HLHK9).